The following is a 105-amino-acid chain: Host transcription reprogramming factor 7 (105 aa).

A signal peptide spans 1-19; it reads MKTKTIFQLVALFAIGATA. The C2H2-type zinc-finger motif lies at 69–95; it reads YWCRIGNCNAAFKSLAARCRHEKTAVH.

It localises to the secreted. It is found in the host nucleus. Its function is as follows. Probable secreted effector that translocates into the nuclei of host cells to reprogram the expression of targeted genes by binding on effector binding elements in rice. The protein is Host transcription reprogramming factor 7 of Pyricularia oryzae (strain 70-15 / ATCC MYA-4617 / FGSC 8958) (Rice blast fungus).